The chain runs to 173 residues: Ribosome maturation factor RimM (173 aa).

The PRC barrel domain occupies 98–170 (VGDMTWDSFI…SLTVSLPEGL (73 aa)).

This sequence belongs to the RimM family. Binds ribosomal protein uS19.

It is found in the cytoplasm. In terms of biological role, an accessory protein needed during the final step in the assembly of 30S ribosomal subunit, possibly for assembly of the head region. Essential for efficient processing of 16S rRNA. May be needed both before and after RbfA during the maturation of 16S rRNA. It has affinity for free ribosomal 30S subunits but not for 70S ribosomes. This is Ribosome maturation factor RimM from Parabacteroides distasonis (strain ATCC 8503 / DSM 20701 / CIP 104284 / JCM 5825 / NCTC 11152).